We begin with the raw amino-acid sequence, 204 residues long: Facilitator of iron transport 3 (204 aa).

Residues 1–18 form the signal peptide; sequence MKFSSALVLSAVAATALA. Disordered stretches follow at residues 84 to 104 and 133 to 175; these read SAAETSSAAETSSADEGSGSS and EGSS…SSTA. Residues 135-175 show a composition bias toward low complexity; that stretch reads SSNTWSPSSTSTSSEAATSSASTTATTTAETSSSATSSSTA. A lipid anchor (GPI-anchor amidated glycine) is attached at G182. Residues 183 to 204 constitute a propeptide, removed in mature form; it reads AADAITAGTGLMGAALAAVMLL.

Post-translationally, the GPI-anchor is attached to the protein in the endoplasmic reticulum and serves to target the protein to the cell surface. There, the glucosamine-inositol phospholipid moiety is cleaved off and the GPI-modified mannoprotein is covalently attached via its lipidless GPI glycan remnant to the 1,6-beta-glucan of the outer cell wall layer.

The protein localises to the secreted. Its subcellular location is the cell wall. It is found in the membrane. Involved in the uptake of non-siderophore and siderophore sources of iron. Has a role in the retention of iron in the cell wall and periplasmic space. This is Facilitator of iron transport 3 (FIT3) from Saccharomyces cerevisiae (strain ATCC 204508 / S288c) (Baker's yeast).